A 590-amino-acid chain; its full sequence is Cytidine monophosphate-N-acetylneuraminic acid hydroxylase (590 aa).

Residues 14–112 (LSPVEVASLK…VEMDENNRLL (99 aa)) enclose the Rieske domain. [2Fe-2S] cluster is bound by residues C54, H56, C75, and H78.

The protein belongs to the CMP-Neu5Ac hydroxylase family. [2Fe-2S] cluster is required as a cofactor.

It localises to the cytoplasm. The enzyme catalyses CMP-N-acetyl-beta-neuraminate + 2 Fe(II)-[cytochrome b5] + O2 + 2 H(+) = CMP-N-glycoloyl-beta-neuraminate + 2 Fe(III)-[cytochrome b5] + H2O. The protein operates within amino-sugar metabolism; N-acetylneuraminate metabolism. Its function is as follows. Sialic acids are components of carbohydrate chains of glycoconjugates and are involved in cell-cell recognition and cell-pathogen interactions. Catalyzes the conversion of CMP-N-acetylneuraminic acid (CMP-Neu5Ac) into its hydroxylated derivative CMP-N-glycolylneuraminic acid (CMP-Neu5Gc), a sialic acid abundantly expressed at the surface of many cells. The chain is Cytidine monophosphate-N-acetylneuraminic acid hydroxylase from Pan troglodytes (Chimpanzee).